The chain runs to 517 residues: MSDDHSIHSHTQGLHHIKKKRVGKACDSCRIKKTKCDGKKPCNRCTLDNKICVFTEKKKTKEKKHPSGYVELLEARLDILTRSLEKLIELSRPHLQFIDDIITEEKSVDQEKSSPASSTPNSSSSDHHDDVEEQNSTGVVAPINKVVSYLIKEQGLLKNIPLEWEQGTEIAANFDPNRNLKSSSRLFAEHKGEAFIGSPVTSPQQMPTSNPFRRTSMFKEELESPSSDHYNESIFSQSVDEPYIKKEPNSAQFSKGTFSPQQQQLQQQQQMLNQFSLNTSRDISDIESDSSNKEDGLNSGSVSPPTSNYRSFSLFSDSNGEPILGKTSSLTSLTNKYENHSLSSPQTAINPVFNNSTTGPILTTLRRNSSSHSQKTLGSIQLQQKPRGSVHKPVRNHSRVSSFDKRMESTATAAATVAAVSGSVQLSQNTTPQNLPHLDNSQNNNYLRDNGMNNIGAGSVGGGLTFGAPSFTQPLSPSDDAIVYPTNQFTNRPATVSTFGGGLDVLVDNSLDPFFNI.

Residues 26 to 52 (CDSCRIKKTKCDGKKPCNRCTLDNKIC) constitute a DNA-binding region (zn(2)-C6 fungal-type). 4 disordered regions span residues 106–137 (KSVD…QNST), 250–270 (SAQF…QQQQ), 284–307 (SDIE…PPTS), and 378–403 (GSIQ…VSSF). The segment covering 113 to 124 (SSPASSTPNSSS) has biased composition (low complexity). The span at 250–260 (SAQFSKGTFSP) shows a compositional bias: polar residues. The span at 261–270 (QQQQLQQQQQ) shows a compositional bias: low complexity. Residues 298–307 (NSGSVSPPTS) show a composition bias toward polar residues. The span at 388-398 (GSVHKPVRNHS) shows a compositional bias: basic residues.

It is found in the nucleus. Transcription factor that acts as a negative regulator of fluconazole resistance in C.albicans. Also confers fluconazole resistance in S.cerevisiae by activation of the PDR5 gene. The protein is Fluconazole resistance protein 1 (FCR1) of Candida albicans (Yeast).